The chain runs to 278 residues: DNA-directed RNA polymerase subunit alpha (278 aa).

It belongs to the RNA polymerase alpha chain family. As to quaternary structure, in plastids the minimal PEP RNA polymerase catalytic core is composed of four subunits: alpha, beta, beta', and beta''. When a (nuclear-encoded) sigma factor is associated with the core the holoenzyme is formed, which can initiate transcription.

It localises to the plastid. The protein resides in the chloroplast. It carries out the reaction RNA(n) + a ribonucleoside 5'-triphosphate = RNA(n+1) + diphosphate. Its function is as follows. DNA-dependent RNA polymerase catalyzes the transcription of DNA into RNA using the four ribonucleoside triphosphates as substrates. The chain is DNA-directed RNA polymerase subunit alpha (rpoA) from Chlorella vulgaris (Green alga).